The following is a 185-amino-acid chain: Ribosome-recycling factor (185 aa).

This sequence belongs to the RRF family.

The protein resides in the cytoplasm. Its function is as follows. Responsible for the release of ribosomes from messenger RNA at the termination of protein biosynthesis. May increase the efficiency of translation by recycling ribosomes from one round of translation to another. The protein is Ribosome-recycling factor of Pseudomonas fluorescens (strain SBW25).